Reading from the N-terminus, the 327-residue chain is Methionyl-tRNA formyltransferase (327 aa).

121-124 (SLLP) contacts (6S)-5,6,7,8-tetrahydrofolate.

It belongs to the Fmt family.

The catalysed reaction is L-methionyl-tRNA(fMet) + (6R)-10-formyltetrahydrofolate = N-formyl-L-methionyl-tRNA(fMet) + (6S)-5,6,7,8-tetrahydrofolate + H(+). In terms of biological role, attaches a formyl group to the free amino group of methionyl-tRNA(fMet). The formyl group appears to play a dual role in the initiator identity of N-formylmethionyl-tRNA by promoting its recognition by IF2 and preventing the misappropriation of this tRNA by the elongation apparatus. The chain is Methionyl-tRNA formyltransferase from Burkholderia pseudomallei (strain 1710b).